The following is a 209-amino-acid chain: Large ribosomal subunit protein uL3 (209 aa).

A disordered region spans residues 141 to 163 (RAVGSMGASSDPSRTFKNKRMPG).

It belongs to the universal ribosomal protein uL3 family. Part of the 50S ribosomal subunit. Forms a cluster with proteins L14 and L19.

Its function is as follows. One of the primary rRNA binding proteins, it binds directly near the 3'-end of the 23S rRNA, where it nucleates assembly of the 50S subunit. This Clostridium botulinum (strain Kyoto / Type A2) protein is Large ribosomal subunit protein uL3.